The following is a 168-amino-acid chain: Variant surface antigen D (168 aa).

An N-terminal signal peptide occupies residues methionine 1 to serine 29. Cysteine 30 is lipidated: N-palmitoyl cysteine. Cysteine 30 carries S-diacylglycerol cysteine lipidation. The segment at threonine 33 to arginine 168 is disordered. 2 stretches are compositionally biased toward low complexity: residues threonine 35–glycine 44 and glycine 52–threonine 71. Positions threonine 72–threonine 81 are enriched in gly residues. 7 consecutive repeat copies span residues threonine 81–lysine 92, glutamate 93–lysine 104, glutamate 105–lysine 116, glutamate 117–lysine 128, glutamate 129–lysine 140, glutamate 141–lysine 152, and glutamate 153–asparagine 164. The interval threonine 81–asparagine 164 is 7 X 12 AA tandem repeats. Positions glycine 82–arginine 168 are enriched in low complexity.

It localises to the cell membrane. In terms of biological role, responsible for the antigenic diversity for host adaptation. Expression in E.coli of a construct containing vlpD, vlpE, and vlpF yields antigenically distinguishable products corresponding to each gene. This Mesomycoplasma hyorhinis (Mycoplasma hyorhinis) protein is Variant surface antigen D (vlpD).